Consider the following 334-residue polypeptide: SH3 and cysteine-rich domain-containing protein 3 (334 aa).

Residues M1 to V26 form a disordered region. Residues L7–D17 are compositionally biased toward basic and acidic residues. The segment at P62 to C113 adopts a Phorbol-ester/DAG-type zinc-finger fold. A compositionally biased stretch (acidic residues) spans E178–G190. The disordered stretch occupies residues E178–T215. The span at A191–K210 shows a compositional bias: basic and acidic residues. 2 SH3 domains span residues S217 to A276 and G277 to L334.

As to quaternary structure, component of a calcium channel complex with CACNA1S. As to expression, expressed in muscles at the muscle triad.

Its subcellular location is the cytoplasm. The protein localises to the cell membrane. The protein resides in the sarcolemma. It localises to the T-tubule. Required for normal excitation-contraction coupling in skeletal muscle and for normal muscle contraction in response to membrane depolarization. Required for normal Ca(2+) release from the sarcplasmic reticulum, which ultimately leads to muscle contraction. Probably functions via its effects on muscle calcium channels. Increases CACNA1S channel activity, in addition to its role in enhancing the expression of CACNA1S at the cell membrane. Has a redundant role in promoting the expression of the calcium channel CACNA1S at the cell membrane. The polypeptide is SH3 and cysteine-rich domain-containing protein 3 (Danio rerio (Zebrafish)).